A 717-amino-acid polypeptide reads, in one-letter code: Patatin-like phospholipase domain-containing protein AO090003000839 (717 aa).

Residues 87-107 (WPFLFIVFGWITVLGFAYALT) traverse the membrane as a helical segment. Positions 277–468 (LCLSGGATFA…RTDIPIRALN (192 aa)) constitute a PNPLA domain. A GXSXG motif is present at residues 308–312 (GTSGG). S310 acts as the Nucleophile in catalysis. The Proton acceptor role is filled by D455. The disordered stretch occupies residues 620–696 (VSPAQSRRKR…STGNIFQEMR (77 aa)). Basic and acidic residues predominate over residues 639–658 (MVERLDHNLPDRQPDNKEDL). The span at 660–673 (DSSGIDSNVSSRDS) shows a compositional bias: low complexity.

The protein belongs to the PLPL family.

The protein resides in the membrane. Functionally, probable lipid hydrolase. This chain is Patatin-like phospholipase domain-containing protein AO090003000839, found in Aspergillus oryzae (strain ATCC 42149 / RIB 40) (Yellow koji mold).